The primary structure comprises 507 residues: Acetylcholine receptor subunit beta-type lev-1 (507 aa).

The first 31 residues, 1-31 (MMLGGGGGCGAGGTWLGFLVFLAVSLRNHST), serve as a signal peptide directing secretion. N-linked (GlcNAc...) asparagine glycosylation is found at Asn28, Asn58, and Asn109. The Extracellular portion of the chain corresponds to 32 to 138 (CEDIDAEDRL…NNADGNYEVS (107 aa)). The chain crosses the membrane as a helical span at residues 139–159 (FMCNVLILSTGTVLWVPPAIY). Cysteines 163 and 177 form a disulfide. A run of 3 helical transmembrane segments spans residues 243 to 263 (VVLI…FYLP), 271 to 291 (GLTM…SKIL), and 305 to 325 (LLLT…ICNI). Residues 373–392 (GPSVEENPMRSGEHHPLCRH) form a disordered region. The segment covering 379–392 (NPMRSGEHHPLCRH) has biased composition (basic and acidic residues). A helical membrane pass occupies residues 454 to 474 (FLLYGFFGATVGGTIGIIFTA).

It belongs to the ligand-gated ion channel (TC 1.A.9) family. Acetylcholine receptor (TC 1.A.9.1) subfamily. In terms of assembly, interacts with unc-29. Component of nicotinic acetylcholine receptor composed of 2 non-alpha subunits lev-1 and unc-29, and 3 alpha subunits unc-38, unc-63 and lev-8.

It localises to the postsynaptic cell membrane. The protein resides in the cell membrane. Its function is as follows. Non-alpha subunit of nicotinic acetylcholine receptor (nAChR). Involved in nAChR sensitivity to nicotine. In Caenorhabditis elegans, this protein is Acetylcholine receptor subunit beta-type lev-1 (lev-1).